Here is a 303-residue protein sequence, read N- to C-terminus: Aspartate carbamoyltransferase catalytic subunit (303 aa).

Positions 51 and 52 each coordinate carbamoyl phosphate. L-aspartate is bound at residue Lys80. Carbamoyl phosphate is bound by residues Arg101, His129, and Gln132. L-aspartate-binding residues include Arg162 and Arg221. Leu260 and Pro261 together coordinate carbamoyl phosphate.

The protein belongs to the aspartate/ornithine carbamoyltransferase superfamily. ATCase family. Heterooligomer of catalytic and regulatory chains.

It catalyses the reaction carbamoyl phosphate + L-aspartate = N-carbamoyl-L-aspartate + phosphate + H(+). It participates in pyrimidine metabolism; UMP biosynthesis via de novo pathway; (S)-dihydroorotate from bicarbonate: step 2/3. In terms of biological role, catalyzes the condensation of carbamoyl phosphate and aspartate to form carbamoyl aspartate and inorganic phosphate, the committed step in the de novo pyrimidine nucleotide biosynthesis pathway. This is Aspartate carbamoyltransferase catalytic subunit from Saccharolobus islandicus (strain M.14.25 / Kamchatka #1) (Sulfolobus islandicus).